The sequence spans 426 residues: Cytochrome c biogenesis protein CcsB (426 aa).

Transmembrane regions (helical) follow at residues 14-34 (LKIAILLLLVIAVSCAAGTLI), 72-92 (SFWFLFLLIWLGLALSVCSFR), and 162-182 (LGPILIHLGMILLMIGATYGS).

Belongs to the Ccs1/CcsB family. May interact with CcsA.

The protein localises to the cellular thylakoid membrane. Its function is as follows. Required during biogenesis of c-type cytochromes (cytochrome c6 and cytochrome f) at the step of heme attachment. The polypeptide is Cytochrome c biogenesis protein CcsB (Prochlorococcus marinus (strain NATL2A)).